A 333-amino-acid polypeptide reads, in one-letter code: NADH-quinone oxidoreductase subunit H (333 aa).

8 helical membrane-spanning segments follow: residues 8–28, 75–95, 108–128, 154–174, 191–211, 251–271, 273–293, and 312–332; these read VLAA…YLVW, ILFM…FVTI, IGLL…LLAG, MLIT…IEIV, PGLF…CSLA, IVIG…CPFG, FPGV…FIWI, and ILIP…KVFA.

Belongs to the complex I subunit 1 family. As to quaternary structure, NDH-1 is composed of 14 different subunits. Subunits NuoA, H, J, K, L, M, N constitute the membrane sector of the complex.

Its subcellular location is the cell inner membrane. It carries out the reaction a quinone + NADH + 5 H(+)(in) = a quinol + NAD(+) + 4 H(+)(out). Functionally, NDH-1 shuttles electrons from NADH, via FMN and iron-sulfur (Fe-S) centers, to quinones in the respiratory chain. The immediate electron acceptor for the enzyme in this species is believed to be ubiquinone. Couples the redox reaction to proton translocation (for every two electrons transferred, four hydrogen ions are translocated across the cytoplasmic membrane), and thus conserves the redox energy in a proton gradient. This subunit may bind ubiquinone. This chain is NADH-quinone oxidoreductase subunit H, found in Desulfotalea psychrophila (strain LSv54 / DSM 12343).